An 82-amino-acid polypeptide reads, in one-letter code: Small ribosomal subunit protein uS17 (82 aa).

It belongs to the universal ribosomal protein uS17 family. Part of the 30S ribosomal subunit.

One of the primary rRNA binding proteins, it binds specifically to the 5'-end of 16S ribosomal RNA. The polypeptide is Small ribosomal subunit protein uS17 (Paracoccus denitrificans (strain Pd 1222)).